A 226-amino-acid chain; its full sequence is UPF0173 metal-dependent hydrolase CTN_1413 (226 aa).

It belongs to the UPF0173 family.

The chain is UPF0173 metal-dependent hydrolase CTN_1413 from Thermotoga neapolitana (strain ATCC 49049 / DSM 4359 / NBRC 107923 / NS-E).